A 263-amino-acid chain; its full sequence is MFNYPLYIYRQDVKSKLMVTNSDFNFTIKETVTLELPFSEHIEELKQRLFHTFWIILILTFISLCEVKLLVKILELPVNNVKFFQLSPGEYFVSTVKISFYTGFLFGSPFAIGQIILFLLPGLTKKETKIILPLLLSSLGLFGFGLVFSYYALIPAALNFFLNYSDEVIEPLWSFDQYFEFILVLFYSTGLAFQIPIIQILLGLLNIISAKQMLAAWRYIILVSTIIGAILTPSTDPLTQLLLSIAILMLYFSGVGILFLIKN.

7 consecutive transmembrane segments (helical) span residues 53 to 73 (FWII…LVKI), 103 to 123 (GFLF…LPGL), 130 to 150 (IILP…VFSY), 153 to 173 (LIPA…EPLW), 181 to 201 (FILV…IQIL), 213 to 233 (MLAA…ILTP), and 241 to 261 (LLLS…LFLI).

This sequence belongs to the TatC family.

The protein resides in the plastid. It localises to the chloroplast membrane. This is an uncharacterized protein from Trieres chinensis (Marine centric diatom).